We begin with the raw amino-acid sequence, 259 residues long: Global transcriptional regulator CodY (259 aa).

The GAF domain stretch occupies residues 1–155 (MNLLEKTRQL…SATVVGMEIL (155 aa)). The H-T-H motif DNA-binding region spans 203–222 (ASKIADRVGITRSVIVNALR).

It belongs to the CodY family.

It is found in the cytoplasm. Its function is as follows. DNA-binding global transcriptional regulator which is involved in the adaptive response to starvation and acts by directly or indirectly controlling the expression of numerous genes in response to nutrient availability. During rapid exponential growth, CodY is highly active and represses genes whose products allow adaptation to nutrient depletion. This chain is Global transcriptional regulator CodY, found in Exiguobacterium sp. (strain ATCC BAA-1283 / AT1b).